A 1773-amino-acid polypeptide reads, in one-letter code: ATP-binding cassette sub-family A member 17 (1773 aa).

3 helical membrane-spanning segments follow: residues 22–42 (TLVT…VLYL), 262–282 (FPLL…NSIL), and 306–326 (AWFI…TVLF). Asn340 carries an N-linked (GlcNAc...) asparagine glycan. A run of 4 helical transmembrane segments spans residues 342–362 (TLIF…AFMM), 372–392 (GTVI…YITF), 403–423 (ILSC…ISLF), and 444–464 (FTQV…VAFL). The ABC transporter 1 domain occupies 525–758 (IEIQHLYKVF…YGAGYYMTII (234 aa)). 561-568 (GHNGAGKT) lines the ATP pocket. Asn615 carries an N-linked (GlcNAc...) asparagine glycan. 7 helical membrane passes run 912–932 (LVLS…LSFF), 1088–1108 (LVVN…ILTV), 1134–1154 (LLWD…VFFW), 1166–1186 (IPAV…LVYT), 1198–1218 (CVKL…LVTV), 1236–1256 (IFLI…YYNF), and 1293–1313 (IGKY…LLFL). N-linked (GlcNAc...) asparagine glycosylation occurs at Asn1340. The 234-residue stretch at 1369 to 1602 (LVVKELSKVY…FGSGYSLQAK (234 aa)) folds into the ABC transporter 2 domain. ATP is bound at residue 1404-1411 (GLNGAGKT). A disordered region spans residues 1690-1773 (NIQQGQAALD…SQPPSEPVLL (84 aa)). Over residues 1700 to 1710 (SSLSPSNSRPI) the composition is skewed to low complexity. Pro residues-rich tracts occupy residues 1711-1740 (SSPP…PSRP) and 1763-1773 (PSQPPSEPVLL).

It belongs to the ABC transporter superfamily. ABCA family. N-glycosylated.

It localises to the endoplasmic reticulum membrane. The protein resides in the cytoplasm. It carries out the reaction cholesterol(in) + ATP + H2O = cholesterol(out) + ADP + phosphate + H(+). In terms of biological role, promotes cholesterol efflux from sperm which renders sperm capable of fertilization. Has also been shown to decrease levels of intracellular esterified neutral lipids including cholesteryl esters, fatty acid esters and triacylglycerols. This chain is ATP-binding cassette sub-family A member 17, found in Rattus norvegicus (Rat).